We begin with the raw amino-acid sequence, 174 residues long: Nucleoside-triphosphatase THEP1 (174 aa).

ATP-binding positions include 8–15 and 99–106; these read GIPGIGKS and LIVIDEVG.

Belongs to the THEP1 NTPase family.

The enzyme catalyses a ribonucleoside 5'-triphosphate + H2O = a ribonucleoside 5'-diphosphate + phosphate + H(+). Functionally, has nucleotide phosphatase activity towards ATP, GTP, CTP, TTP and UTP. May hydrolyze nucleoside diphosphates with lower efficiency. The chain is Nucleoside-triphosphatase THEP1 from Methanosarcina barkeri (strain Fusaro / DSM 804).